The chain runs to 204 residues: Imidazoleglycerol-phosphate dehydratase (204 aa).

It belongs to the imidazoleglycerol-phosphate dehydratase family.

Its subcellular location is the cytoplasm. It carries out the reaction D-erythro-1-(imidazol-4-yl)glycerol 3-phosphate = 3-(imidazol-4-yl)-2-oxopropyl phosphate + H2O. It participates in amino-acid biosynthesis; L-histidine biosynthesis; L-histidine from 5-phospho-alpha-D-ribose 1-diphosphate: step 6/9. In Rhodococcus erythropolis (strain PR4 / NBRC 100887), this protein is Imidazoleglycerol-phosphate dehydratase.